The primary structure comprises 115 residues: Evasin P1181 (115 aa).

The N-terminal stretch at 1–25 (MALNWSFRVIFVSAMWCALLKFATL) is a signal peptide. 4 disulfides stabilise this stretch: C38–C58, C54–C94, C70–C99, and C89–C108. N-linked (GlcNAc...) asparagine glycans are attached at residues N45, N72, and N103.

The protein resides in the secreted. Its function is as follows. Salivary chemokine-binding protein which binds to host chemokines CCL3 and CCL4. This Amblyomma maculatum (Gulf Coast tick) protein is Evasin P1181.